The sequence spans 160 residues: Nutritionally-regulated adipose and cardiac enriched protein homolog (160 aa).

The segment at Met1–Val69 is disordered. 2 stretches are compositionally biased toward basic and acidic residues: residues Ser12–Glu25 and Cys33–Lys42. A helical transmembrane segment spans residues Gly101–Tyr121.

The protein resides in the cell membrane. The protein is Nutritionally-regulated adipose and cardiac enriched protein homolog (NRAC) of Homo sapiens (Human).